The sequence spans 466 residues: Ribulose bisphosphate carboxylase (466 aa).

Asparagine 111 lines the substrate pocket. The active-site Proton acceptor is the lysine 166. Residue lysine 168 coordinates substrate. Mg(2+) is bound by residues lysine 191, aspartate 193, and glutamate 194. The residue at position 191 (lysine 191) is an N6-carboxylysine. Histidine 287 (proton acceptor) is an active-site residue. The substrate site is built by arginine 288, histidine 321, and serine 368.

The protein belongs to the RuBisCO large chain family. Type II subfamily. As to quaternary structure, homodimer. Requires Mg(2+) as cofactor.

It catalyses the reaction 2 (2R)-3-phosphoglycerate + 2 H(+) = D-ribulose 1,5-bisphosphate + CO2 + H2O. The enzyme catalyses D-ribulose 1,5-bisphosphate + O2 = 2-phosphoglycolate + (2R)-3-phosphoglycerate + 2 H(+). In terms of biological role, ruBisCO catalyzes two reactions: the carboxylation of D-ribulose 1,5-bisphosphate, the primary event in carbon dioxide fixation, as well as the oxidative fragmentation of the pentose substrate. Both reactions occur simultaneously and in competition at the same active site. The polypeptide is Ribulose bisphosphate carboxylase (Rhodospirillum rubrum (strain ATCC 11170 / ATH 1.1.1 / DSM 467 / LMG 4362 / NCIMB 8255 / S1)).